A 261-amino-acid chain; its full sequence is Ribosome biogenesis protein NSA2 (261 aa).

The segment at 1–34 (MPQNEYIEQHIKQHGRRLDYEERKRKKAAREGHR) is disordered. Positions 7-34 (IEQHIKQHGRRLDYEERKRKKAAREGHR) are enriched in basic and acidic residues. Short sequence motifs (nuclear localization signal) lie at residues 15–22 (GRRLDYEE) and 51–58 (AKKRYSEK). The interval 61 to 85 (MKKKIKTHQESKVKGPATPKEDDGE) is disordered.

Belongs to the eukaryotic ribosomal protein eS8 family. Ribosome biogenesis protein NSA2 subfamily. As to quaternary structure, component of the pre-66S ribosomal particle. Interacts with NOP7 and RRP1. Interacts with RSA4 (via WD repeats).

Its subcellular location is the nucleus. The protein resides in the nucleolus. Involved in the biogenesis of the 60S ribosomal subunit. May play a part in the quality control of pre-60S particles. The polypeptide is Ribosome biogenesis protein NSA2 (NSA2) (Debaryomyces hansenii (strain ATCC 36239 / CBS 767 / BCRC 21394 / JCM 1990 / NBRC 0083 / IGC 2968) (Yeast)).